The following is a 93-amino-acid chain: Small ribosomal subunit protein uS19 (93 aa).

This sequence belongs to the universal ribosomal protein uS19 family.

In terms of biological role, protein S19 forms a complex with S13 that binds strongly to the 16S ribosomal RNA. The protein is Small ribosomal subunit protein uS19 of Synechococcus sp. (strain JA-3-3Ab) (Cyanobacteria bacterium Yellowstone A-Prime).